We begin with the raw amino-acid sequence, 997 residues long: Burkholderia TALE-like protein 2 (997 aa).

The stretch at 19–50 (LSPLERIKIEKHYGGGATLAFISNQHDELAQV) is one Cryptic repeat -1 repeat. A Cryptic repeat 0 repeat occupies 51 to 83 (LSRADILKIASYDCAAQALQAVLDCGPMLGKRG). Core repeat repeat units lie at residues 84-116 (FSRA…GKRG), 117-147 (FSQV…GERG), 148-180 (FSRG…RERG), 181-213 (FNQA…GKRG), 214-244 (FSRV…RKRG), 245-277 (FHPT…RERG), 278-310 (FSQA…CERG), 311-343 (FSQP…RERG), 344-376 (FSQA…HERG), 377-409 (FSQA…RERG), 410-442 (FSQP…RERG), 443-475 (VRQA…RERG), 476-508 (FNQA…DKRG), 509-539 (FSRV…RKRG), 540-572 (FNPT…RERG), 573-605 (FNQA…RERG), 606-638 (FSQP…HKRG), 639-671 (FNPT…RERG), 672-704 (FGQP…RERG), 705-737 (FSQP…RERG), 738-770 (FSQS…RESD), 771-803 (FRQA…RQRG), 804-836 (FNRA…DERG), 837-869 (FNLT…QQRG), 870-902 (FNLT…RQRG), 903-935 (FNLI…RQRD), and 936-967 (LSLI…MQAG). Residues 84-967 (FSRADIVRIA…KYGPVLMQAG (884 aa)) form a buD domain region. 4 ANK repeats span residues 772–801 (RQAD…RLRQ), 805–834 (NRAS…TLDE), 838–867 (NLTN…TLQQ), and 871–900 (NLTD…TLRQ). The stretch at 968–997 (RSNEEIVHVAARRGGAGRIRKMVALLLERQ) is one Cryptic repeat +1 repeat.

The protein belongs to the transcription activator-like effector (TALE) family. Bat subfamily.

Binds to DNA in a sequence-specific manner. In Mycetohabitans rhizoxinica (strain DSM 19002 / CIP 109453 / HKI 454) (Paraburkholderia rhizoxinica), this protein is Burkholderia TALE-like protein 2.